We begin with the raw amino-acid sequence, 29 residues long: Pyridoxal 5'-phosphate synthase subunit PdxS (29 aa).

It belongs to the PdxS/SNZ family. In the presence of PdxT, forms a dodecamer of heterodimers.

It carries out the reaction aldehydo-D-ribose 5-phosphate + D-glyceraldehyde 3-phosphate + L-glutamine = pyridoxal 5'-phosphate + L-glutamate + phosphate + 3 H2O + H(+). Its pathway is cofactor biosynthesis; pyridoxal 5'-phosphate biosynthesis. In terms of biological role, catalyzes the formation of pyridoxal 5'-phosphate from ribose 5-phosphate (RBP), glyceraldehyde 3-phosphate (G3P) and ammonia. The ammonia is provided by the PdxT subunit. Can also use ribulose 5-phosphate and dihydroxyacetone phosphate as substrates, resulting from enzyme-catalyzed isomerization of RBP and G3P, respectively. The sequence is that of Pyridoxal 5'-phosphate synthase subunit PdxS from Clostridium pasteurianum.